Here is a 436-residue protein sequence, read N- to C-terminus: Adenylosuccinate synthetase (436 aa).

GTP is bound by residues 12–18 (GDEGKGK) and 40–42 (GHT). The active-site Proton acceptor is the Asp-13. Positions 13 and 40 each coordinate Mg(2+). IMP-binding positions include 13–16 (DEGK), 38–41 (NAGH), Thr-128, Arg-142, Gln-223, Thr-238, and Arg-302. Residue His-41 is the Proton donor of the active site. 298-304 (TTTGRRR) contacts substrate. GTP contacts are provided by residues Arg-304, 330 to 332 (KLD), and 412 to 414 (SLG).

The protein belongs to the adenylosuccinate synthetase family. Homodimer. Requires Mg(2+) as cofactor.

Its subcellular location is the cytoplasm. It carries out the reaction IMP + L-aspartate + GTP = N(6)-(1,2-dicarboxyethyl)-AMP + GDP + phosphate + 2 H(+). It participates in purine metabolism; AMP biosynthesis via de novo pathway; AMP from IMP: step 1/2. Plays an important role in the de novo pathway of purine nucleotide biosynthesis. Catalyzes the first committed step in the biosynthesis of AMP from IMP. This chain is Adenylosuccinate synthetase, found in Prochlorococcus marinus (strain MIT 9312).